The sequence spans 217 residues: Redox-sensing transcriptional repressor Rex (217 aa).

The segment at residues 18-57 is a DNA-binding region (H-T-H motif); it reads LYYRFLKNLHASGKQRVSSAELSDAVKVDSATIRRDFSYF. 92-97 is a binding site for NAD(+); sequence GVGNLG.

The protein belongs to the transcriptional regulatory Rex family. As to quaternary structure, homodimer.

It localises to the cytoplasm. Functionally, modulates transcription in response to changes in cellular NADH/NAD(+) redox state. The protein is Redox-sensing transcriptional repressor Rex of Bacillus pumilus (strain SAFR-032).